We begin with the raw amino-acid sequence, 281 residues long: NADPH-dependent 7-cyano-7-deazaguanine reductase (281 aa).

88–90 provides a ligand contact to substrate; it reads IES. 90 to 91 serves as a coordination point for NADPH; it reads SK. The active-site Thioimide intermediate is C189. D196 serves as the catalytic Proton donor. 228–229 provides a ligand contact to substrate; sequence HE. 257 to 258 contacts NADPH; it reads RG.

Belongs to the GTP cyclohydrolase I family. QueF type 2 subfamily. As to quaternary structure, homodimer.

Its subcellular location is the cytoplasm. It catalyses the reaction 7-aminomethyl-7-carbaguanine + 2 NADP(+) = 7-cyano-7-deazaguanine + 2 NADPH + 3 H(+). It participates in tRNA modification; tRNA-queuosine biosynthesis. Catalyzes the NADPH-dependent reduction of 7-cyano-7-deazaguanine (preQ0) to 7-aminomethyl-7-deazaguanine (preQ1). The chain is NADPH-dependent 7-cyano-7-deazaguanine reductase from Yersinia pestis bv. Antiqua (strain Antiqua).